Consider the following 364-residue polypeptide: tRNA-specific 2-thiouridylase MnmA (364 aa).

ATP contacts are provided by residues 13–20 (GMSGGVDS) and M39. Residues 99-101 (NPD) form an interaction with target base in tRNA region. C104 functions as the Nucleophile in the catalytic mechanism. C104 and C199 are oxidised to a cystine. Residue G128 coordinates ATP. Positions 149-151 (KDQ) are interaction with tRNA. The active-site Cysteine persulfide intermediate is C199. An interaction with tRNA region spans residues 311-312 (RY).

The protein belongs to the MnmA/TRMU family.

It localises to the cytoplasm. It carries out the reaction S-sulfanyl-L-cysteinyl-[protein] + uridine(34) in tRNA + AH2 + ATP = 2-thiouridine(34) in tRNA + L-cysteinyl-[protein] + A + AMP + diphosphate + H(+). Catalyzes the 2-thiolation of uridine at the wobble position (U34) of tRNA, leading to the formation of s(2)U34. The polypeptide is tRNA-specific 2-thiouridylase MnmA (Alcanivorax borkumensis (strain ATCC 700651 / DSM 11573 / NCIMB 13689 / SK2)).